Here is a 271-residue protein sequence, read N- to C-terminus: Phycocyanobilin lyase subunit alpha (271 aa).

Belongs to the CpcE/RpcE/PecE family. CpcE and CpcF associate to form a lyase.

Functionally, required for the chromophorylation of the cpcA1 gene product. The polypeptide is Phycocyanobilin lyase subunit alpha (cpcE1) (Pseudanabaena tenuis (strain PCC 7409)).